Consider the following 1462-residue polypeptide: Iron-sulfur cluster assembly protein SufD (1462 aa).

Disordered regions lie at residues 500 to 525, 938 to 970, and 1111 to 1153; these read IDNNQNDDIDNNNNNNNNNNNCDNPY, NQNKENENENENNSQSDNNTTKQHIQDEQGTEQ, and NIPS…EKEE. Over residues 510 to 523 the composition is skewed to low complexity; the sequence is NNNNNNNNNNNCDN. Positions 961–970 are enriched in basic and acidic residues; it reads HIQDEQGTEQ. Residues 1111–1136 show a composition bias toward low complexity; it reads NIPSNNKQTNSNNNSEYNNEQNNCSN.

It belongs to the iron-sulfur cluster assembly SufBD family. Component of a complex composed of SufB, SufC and SufD in a stoichiometric ratio of 1:2:1. Interacts with SufB. Interacts with SufC; the interaction enhances the ATPase activity of SufC. Proteolytically cleaved.

It is found in the plastid. The protein resides in the apicoplast. Its pathway is cofactor biosynthesis; iron-sulfur cluster biosynthesis. Participates in the sulfur mobilization (SUF) pathway for iron-sulfur (Fe-S) cluster biogenesis. As part of a complex consisting of SufB-SufC(2)-SufD, involved in assembly of [4Fe-4S] clusters. Enhances the ATPase activity of SufC. The protein is Iron-sulfur cluster assembly protein SufD of Plasmodium falciparum (isolate 3D7).